Reading from the N-terminus, the 623-residue chain is Chaperone protein HtpG (623 aa).

The interval 1–326 (MAEEKRQFQA…SQDLPLNVSR (326 aa)) is a; substrate-binding. The segment at 327–543 (EMLQHNPVLS…EGEMSMHLEK (217 aa)) is b. The tract at residues 544-623 (MLRAHNQAPG…VSVMEKGLLG (80 aa)) is c.

The protein belongs to the heat shock protein 90 family. Homodimer.

The protein resides in the cytoplasm. In terms of biological role, molecular chaperone. Has ATPase activity. The chain is Chaperone protein HtpG from Paramagnetospirillum magneticum (strain ATCC 700264 / AMB-1) (Magnetospirillum magneticum).